We begin with the raw amino-acid sequence, 221 residues long: Serine/arginine-rich splicing factor 2 (221 aa).

The residue at position 2 (Ser-2) is an N-acetylserine. A Phosphoserine modification is found at Ser-2. The RRM domain maps to 14 to 92; that stretch reads TSLKVDNLTY…RELRVQMARY (79 aa). Phosphothreonine is present on residues Thr-22 and Thr-25. Residue Ser-26 is modified to Phosphoserine. Position 52 is an N6-acetyllysine (Lys-52). Residues 92-221 are disordered; the sequence is YGRPPDSHHS…SPEEEGAVSS (130 aa). Composition is skewed to basic residues over residues 117–171 and 179–189; these read RRSR…RSKS and SRSRSRSRSRS. Phosphoserine is present on residues Ser-189, Ser-191, Ser-204, Ser-206, Ser-208, Ser-212, and Ser-220.

It belongs to the splicing factor SR family. As to quaternary structure, interacts with CCNL1 and CCNL2. Interacts with SCAF11. Interacts with ZRSR2/U2AF1-RS2. Interacts with CCDC55 (via C-terminus). In vitro, self-associates and binds SRSF1/SFRS1 (ASF/SF2), SNRNP70 and U2AF1 but not U2AF2. Binds SREK1/SFRS12. Interacts with BRDT. Extensively phosphorylated on serine residues in the RS domain. Phosphorylated by SRPK2 and this causes its redistribution from the nuclear speckle to nucleoplasm and controls cell fate decision in response to cisplatin treatment. KAT5/TIP60 inhibits its phosphorylation by preventing SRPK2 nuclear translocation. Post-translationally, acetylation on Lys-52 by KAT5/TIP60 promotes its proteasomal degradation. This effect is counterbalanced by HDAC6, which positively controls SRSF2 protein level by deacetylating it and preventing its proteasomal degradation. Expressed in all the tissues examined; liver, kidney, spleen, heart, lung and brain.

It localises to the nucleus. Its subcellular location is the nucleoplasm. The protein localises to the nucleus speckle. Functionally, necessary for the splicing of pre-mRNA. It is required for formation of the earliest ATP-dependent splicing complex and interacts with spliceosomal components bound to both the 5'- and 3'-splice sites during spliceosome assembly. It also is required for ATP-dependent interactions of both U1 and U2 snRNPs with pre-mRNA. Can bind to the myelin basic protein (MBP) gene MB3 regulatory region and increase transcription of the mbp promoter in cells derived from the CNS. The phosphorylated form (by SRPK2) is required for cellular apoptosis in response to cisplatin treatment. The polypeptide is Serine/arginine-rich splicing factor 2 (Srsf2) (Mus musculus (Mouse)).